The chain runs to 172 residues: MKREKKEQVVQSVTEKVSRSQGIYLTEFQGLSVSRMSELRNEFRKAGVEYRVVKNTLVKKALSDLAGADRLAGALKNTTGVAFGYDDPIAPARVIKKFSKDNESLKFKMAAIDGVVFEADQLGVLSEMLTKTENIGRAAGIINNVIASVPMVMNAVMRDLVSVVDQVGKQKQ.

The protein belongs to the universal ribosomal protein uL10 family. Part of the ribosomal stalk of the 50S ribosomal subunit. The N-terminus interacts with L11 and the large rRNA to form the base of the stalk. The C-terminus forms an elongated spine to which L12 dimers bind in a sequential fashion forming a multimeric L10(L12)X complex.

Functionally, forms part of the ribosomal stalk, playing a central role in the interaction of the ribosome with GTP-bound translation factors. This is Large ribosomal subunit protein uL10 from Chlorobium phaeovibrioides (strain DSM 265 / 1930) (Prosthecochloris vibrioformis (strain DSM 265)).